We begin with the raw amino-acid sequence, 169 residues long: uncharacterized protein (169 aa).

Residues 10–30 (YFVTILIIIIIILIVLLIVFL) form a helical membrane-spanning segment. Residues 98–123 (QSKPINKNNQQTKNTPTPLDDRPDLS) are disordered. Residues 100–115 (KPINKNNQQTKNTPTP) are compositionally biased toward low complexity.

The protein localises to the membrane. This is an uncharacterized protein from Acanthamoeba polyphaga (Amoeba).